The chain runs to 431 residues: 4-hydroxy-3-methylbut-2-en-1-yl diphosphate synthase (flavodoxin) (431 aa).

The tract at residues 1–21 (MNKLENPSQRDVAGPSPRHKT) is disordered. Positions 310, 313, 356, and 363 each coordinate [4Fe-4S] cluster.

Belongs to the IspG family. It depends on [4Fe-4S] cluster as a cofactor.

The enzyme catalyses (2E)-4-hydroxy-3-methylbut-2-enyl diphosphate + oxidized [flavodoxin] + H2O + 2 H(+) = 2-C-methyl-D-erythritol 2,4-cyclic diphosphate + reduced [flavodoxin]. The protein operates within isoprenoid biosynthesis; isopentenyl diphosphate biosynthesis via DXP pathway; isopentenyl diphosphate from 1-deoxy-D-xylulose 5-phosphate: step 5/6. Converts 2C-methyl-D-erythritol 2,4-cyclodiphosphate (ME-2,4cPP) into 1-hydroxy-2-methyl-2-(E)-butenyl 4-diphosphate. The polypeptide is 4-hydroxy-3-methylbut-2-en-1-yl diphosphate synthase (flavodoxin) (Nitrobacter hamburgensis (strain DSM 10229 / NCIMB 13809 / X14)).